The sequence spans 1070 residues: DNA-directed RNA polymerase subunit beta (1070 aa).

Belongs to the RNA polymerase beta chain family. In terms of assembly, in plastids the minimal PEP RNA polymerase catalytic core is composed of four subunits: alpha, beta, beta', and beta''. When a (nuclear-encoded) sigma factor is associated with the core the holoenzyme is formed, which can initiate transcription.

It is found in the plastid. Its subcellular location is the chloroplast. The catalysed reaction is RNA(n) + a ribonucleoside 5'-triphosphate = RNA(n+1) + diphosphate. Functionally, DNA-dependent RNA polymerase catalyzes the transcription of DNA into RNA using the four ribonucleoside triphosphates as substrates. This is DNA-directed RNA polymerase subunit beta from Buxus microphylla (Littleleaf boxwood).